Reading from the N-terminus, the 691-residue chain is Threonine--tRNA ligase (691 aa).

Positions 1 to 22 are disordered; that stretch reads MSVPAQPAPGADGGDPRQPIRV. Residues 1-73 form the TGS domain; that stretch reads MSVPAQPAPG…DADAEVTPIA (73 aa). A catalytic region spans residues 268–574; it reads DHRKLGVELD…LTEHYAGAFP (307 aa). The Zn(2+) site is built by C373, H424, and H551.

It belongs to the class-II aminoacyl-tRNA synthetase family. As to quaternary structure, homodimer. It depends on Zn(2+) as a cofactor.

The protein localises to the cytoplasm. It catalyses the reaction tRNA(Thr) + L-threonine + ATP = L-threonyl-tRNA(Thr) + AMP + diphosphate + H(+). Its function is as follows. Catalyzes the attachment of threonine to tRNA(Thr) in a two-step reaction: L-threonine is first activated by ATP to form Thr-AMP and then transferred to the acceptor end of tRNA(Thr). Also edits incorrectly charged L-seryl-tRNA(Thr). This Mycobacterium ulcerans (strain Agy99) protein is Threonine--tRNA ligase.